A 74-amino-acid chain; its full sequence is Invertase 3 (74 aa).

The first 19 residues, 1-19 (MLLQAFIFLLAGFAAKISA), serve as a signal peptide directing secretion. N-linked (GlcNAc...) asparagine glycosylation occurs at Asn-23. Residues 39 to 42 (WMND) and Gln-60 each bind substrate. Residue Asp-42 is part of the active site. Asn-64 carries an N-linked (GlcNAc...) asparagine glycan.

It belongs to the glycosyl hydrolase 32 family.

The enzyme catalyses Hydrolysis of terminal non-reducing beta-D-fructofuranoside residues in beta-D-fructofuranosides.. The chain is Invertase 3 (SUC3) from Saccharomyces cerevisiae (Baker's yeast).